The primary structure comprises 112 residues: UPF0375 protein R05A10.4 (112 aa).

An N-terminal signal peptide occupies residues 1–19 (MNLSIFSAIIFSITIASSA). N59 is a glycosylation site (N-linked (GlcNAc...) asparagine).

This sequence belongs to the UPF0375 family.

The protein localises to the secreted. This is UPF0375 protein R05A10.4 from Caenorhabditis elegans.